The primary structure comprises 89 residues: Large ribosomal subunit protein bL27 (89 aa).

The protein belongs to the bacterial ribosomal protein bL27 family.

This is Large ribosomal subunit protein bL27 from Cytophaga hutchinsonii (strain ATCC 33406 / DSM 1761 / CIP 103989 / NBRC 15051 / NCIMB 9469 / D465).